A 248-amino-acid chain; its full sequence is Homeobox protein BarH-like 1 (248 aa).

The segment at residues 135–194 (GRRSRTVFTELQLMGLEKRFEKQKYLSTPDRIDLAESLGLSQLQVKTWYQNRRMKWKKIV) is a DNA-binding region (homeobox). The segment at 197–248 (GGGLESPTKPKGRPKKNSIPTSEQLSEQERTREADRLSDGGASSLSDANQEE) is disordered. Residues 223-234 (EQERTREADRLS) show a composition bias toward basic and acidic residues. Residues 237 to 248 (GASSLSDANQEE) show a composition bias toward polar residues.

The protein belongs to the BAR homeobox family.

Its subcellular location is the nucleus. Functionally, transcription factor, is involved in craniofacial development, and in stomach organogenesis. The sequence is that of Homeobox protein BarH-like 1 (barx1) from Danio rerio (Zebrafish).